A 96-amino-acid polypeptide reads, in one-letter code: Large ribosomal subunit protein bL25 (96 aa).

This sequence belongs to the bacterial ribosomal protein bL25 family. Part of the 50S ribosomal subunit; part of the 5S rRNA/L5/L18/L25 subcomplex. Contacts the 5S rRNA. Binds to the 5S rRNA independently of L5 and L18.

In terms of biological role, this is one of the proteins that binds to the 5S RNA in the ribosome where it forms part of the central protuberance. The polypeptide is Large ribosomal subunit protein bL25 (Francisella tularensis subsp. tularensis (strain FSC 198)).